The primary structure comprises 475 residues: ATP synthase subunit beta (475 aa).

153 to 160 is a binding site for ATP; the sequence is GGAGVGKT.

The protein belongs to the ATPase alpha/beta chains family. F-type ATPases have 2 components, CF(1) - the catalytic core - and CF(0) - the membrane proton channel. CF(1) has five subunits: alpha(3), beta(3), gamma(1), delta(1), epsilon(1). CF(0) has three main subunits: a(1), b(2) and c(9-12). The alpha and beta chains form an alternating ring which encloses part of the gamma chain. CF(1) is attached to CF(0) by a central stalk formed by the gamma and epsilon chains, while a peripheral stalk is formed by the delta and b chains.

It localises to the cell membrane. The catalysed reaction is ATP + H2O + 4 H(+)(in) = ADP + phosphate + 5 H(+)(out). In terms of biological role, produces ATP from ADP in the presence of a proton gradient across the membrane. The catalytic sites are hosted primarily by the beta subunits. The chain is ATP synthase subunit beta from Limosilactobacillus reuteri (strain DSM 20016) (Lactobacillus reuteri).